The primary structure comprises 88 residues: Small ribosomal subunit protein bS20 (88 aa).

This sequence belongs to the bacterial ribosomal protein bS20 family.

In terms of biological role, binds directly to 16S ribosomal RNA. This is Small ribosomal subunit protein bS20 from Bacillus licheniformis (strain ATCC 14580 / DSM 13 / JCM 2505 / CCUG 7422 / NBRC 12200 / NCIMB 9375 / NCTC 10341 / NRRL NRS-1264 / Gibson 46).